Consider the following 229-residue polypeptide: Large ribosomal subunit protein uL1 (229 aa).

Belongs to the universal ribosomal protein uL1 family. Part of the 50S ribosomal subunit.

Its function is as follows. Binds directly to 23S rRNA. The L1 stalk is quite mobile in the ribosome, and is involved in E site tRNA release. In terms of biological role, protein L1 is also a translational repressor protein, it controls the translation of the L11 operon by binding to its mRNA. This chain is Large ribosomal subunit protein uL1, found in Mannheimia succiniciproducens (strain KCTC 0769BP / MBEL55E).